A 215-amino-acid polypeptide reads, in one-letter code: MAARAQFLREYKLVVVGGGGVGKSALTIQFIQSHFVDEYDPTIEDSYRKQCIIDDEVALLDVLDTAGQEEYGAMREQYMRTGEGFLLVYSITSRNSFEEISIFHQQILRVKDQDSFPVIVVANKCDLEYERQVGMNEGRDLAKHFGCKFIETSAKQRINVDEAFSNLVREIRKYNREQQTGRPAIAAGGGGPAGSYTQDRHHDEAPGCCAGCVIA.

A GTP-binding site is contributed by 17 to 24; that stretch reads GGGGVGKS. Residues 39–47 carry the Effector region motif; sequence YDPTIEDSY. GTP contacts are provided by residues 64 to 68 and 123 to 126; these read DTAGQ and NKCD. A disordered region spans residues 179–199; it reads QTGRPAIAAGGGGPAGSYTQD. Cys212 carries the cysteine methyl ester modification. Residue Cys212 is the site of S-farnesyl cysteine attachment. Residues 213–215 constitute a propeptide, removed in mature form; the sequence is VIA.

Belongs to the small GTPase superfamily. Ras family.

The protein resides in the cell membrane. It carries out the reaction GTP + H2O = GDP + phosphate + H(+). In terms of biological role, ras proteins bind GDP/GTP and possess intrinsic GTPase activity. In Coprinopsis cinerea (strain Okayama-7 / 130 / ATCC MYA-4618 / FGSC 9003) (Inky cap fungus), this protein is 24 kDa Ras-like protein (CC-RAS).